Consider the following 177-residue polypeptide: Probable DNA-directed RNA polymerase subunit delta (177 aa).

The region spanning 14–81 is the HTH HARE-type domain; the sequence is CSMIEVVHSV…GENRWGLRSW (68 aa). The disordered stretch occupies residues 90 to 177; the sequence is EILPQPKPKK…ETEEEEEEEL (88 aa). Residues 106 to 177 are compositionally biased toward acidic residues; sequence DGFDDYIEED…ETEEEEEEEL (72 aa).

Belongs to the RpoE family. RNAP is composed of a core of 2 alpha, a beta and a beta' subunits. The core is associated with a delta subunit and one of several sigma factors.

Its function is as follows. Participates in both the initiation and recycling phases of transcription. In the presence of the delta subunit, RNAP displays an increased specificity of transcription, a decreased affinity for nucleic acids, and an increased efficiency of RNA synthesis because of enhanced recycling. The polypeptide is Probable DNA-directed RNA polymerase subunit delta (Bacillus cereus (strain B4264)).